Reading from the N-terminus, the 618-residue chain is Chaperone protein DnaK (618 aa).

At threonine 175 the chain carries Phosphothreonine; by autocatalysis. Positions 579–618 (GAPGAEGFDSNMAGEANAGQNANNDDNVVDADYKVEDDEK) are disordered. A compositionally biased stretch (low complexity) spans 591-604 (AGEANAGQNANNDD).

The protein belongs to the heat shock protein 70 family.

Its function is as follows. Acts as a chaperone. The protein is Chaperone protein DnaK of Clostridium tetani (strain Massachusetts / E88).